Here is a 472-residue protein sequence, read N- to C-terminus: MGAVLGVFSLASWVPCLCSGASCLLCSCCPISKNSTVTRLIYAFILFLGTIVSCIMMTEGIQTQLKKIPGFCEGGFQIKMVDTKAEKDCDVLVGFKAVYRINFAVAIFFFAFFLLMLKVKTSKDPRAAVHNGFWFFKIAAIIGIMIGSFYIPGGSFTEVWFVAGMLGASFFIIIQLVLLVDMAHSWNELWVNRMEEGNPRLWYAALLSFTSLFYILSIVFAALLYVFYTKPDDCTENKVFISLNLIFCVAVSIVSILPKVQEHQPRSGLLQSSIITLYTLYLTWSAMTNEPERSCNPSLMSIITHLTSPTVSPANSTTLAPAYAPPSQSGHFMNLDDIWGLIIFVFCLIYSSFRTSSNSQVNKLTLSGSDSVILGDTTNGANDEEDGQPRRAVDNEKEGVQYSYSFFHLMLCCASLYIMMTITSWYSPDAKFQKVSSKWLAVWFKMGSSWLCLLLYLWTLVAPLVLTGRDFS.

Residues 1-96 lie on the Extracellular side of the membrane; it reads MGAVLGVFSL…KDCDVLVGFK (96 aa). A glycan (N-linked (GlcNAc...) asparagine) is linked at Asn34. A helical membrane pass occupies residues 97–117; that stretch reads AVYRINFAVAIFFFAFFLLML. Residues 118-132 lie on the Cytoplasmic side of the membrane; the sequence is KVKTSKDPRAAVHNG. Residues 133-153 form a helical membrane-spanning segment; sequence FWFFKIAAIIGIMIGSFYIPG. The Extracellular portion of the chain corresponds to 154-158; that stretch reads GSFTE. The helical transmembrane segment at 159–179 threads the bilayer; the sequence is VWFVAGMLGASFFIIIQLVLL. Over 180-206 the chain is Cytoplasmic; it reads VDMAHSWNELWVNRMEEGNPRLWYAAL. Residues 207–227 form a helical membrane-spanning segment; sequence LSFTSLFYILSIVFAALLYVF. The Extracellular segment spans residues 228 to 238; it reads YTKPDDCTENK. The chain crosses the membrane as a helical span at residues 239-259; it reads VFISLNLIFCVAVSIVSILPK. Over 260-329 the chain is Cytoplasmic; the sequence is VQEHQPRSGL…APAYAPPSQS (70 aa). A helical membrane pass occupies residues 330–350; the sequence is GHFMNLDDIWGLIIFVFCLIY. The Extracellular portion of the chain corresponds to 351-405; it reads SSFRTSSNSQVNKLTLSGSDSVILGDTTNGANDEEDGQPRRAVDNEKEGVQYSYS. At Ser371 the chain carries Phosphoserine. Residues 406-426 form a helical membrane-spanning segment; the sequence is FFHLMLCCASLYIMMTITSWY. The Cytoplasmic segment spans residues 427–445; it reads SPDAKFQKVSSKWLAVWFK. The helical transmembrane segment at 446-466 threads the bilayer; the sequence is MGSSWLCLLLYLWTLVAPLVL. Over 467–472 the chain is Extracellular; it reads TGRDFS.

This sequence belongs to the TDE1 family. In terms of processing, N-glycosylated. In terms of tissue distribution, highly expressed in the neuronal populations such as Purkinje cells in the cerebellum, brainstem and spinal motor neurons, locus coeruleus and raphe nuclei. Highly expressed also in thymus, kidney liver and testis.

Its subcellular location is the cell membrane. The protein resides in the golgi apparatus membrane. The enzyme catalyses a 1,2-diacyl-sn-glycero-3-phospho-L-serine(in) = a 1,2-diacyl-sn-glycero-3-phospho-L-serine(out). It carries out the reaction a 1,2-diacyl-sn-glycero-3-phosphocholine(in) = a 1,2-diacyl-sn-glycero-3-phosphocholine(out). The catalysed reaction is a 1,2-diacyl-sn-glycero-3-phosphoethanolamine(in) = a 1,2-diacyl-sn-glycero-3-phosphoethanolamine(out). Its function is as follows. Restriction factor required to restrict infectivity of gammaretroviruses: acts by inhibiting an early step of viral infection. Impairs the penetration of the viral particle into the cytoplasm. Non-ATP-dependent, non-specific lipid transporter for phosphatidylserine, phosphatidylcholine, and phosphatidylethanolamine. Functions as a scramblase that flips lipids in both directions across the membrane. Phospholipid scrambling results in gammaretroviral surface exposure of phosphatidylserine and loss of membrane asymmetry, which leads to loss of infectivity. This Mus musculus (Mouse) protein is Serine incorporator 3 (Serinc3).